The following is a 245-amino-acid chain: Probable septum site-determining protein MinC (245 aa).

Over residues 113–132 (RERPLEPLVGEEKKKPEKPP) the composition is skewed to basic and acidic residues. The disordered stretch occupies residues 113–138 (RERPLEPLVGEEKKKPEKPPEPTIKP).

This sequence belongs to the MinC family. In terms of assembly, interacts with MinD and FtsZ.

In terms of biological role, cell division inhibitor that blocks the formation of polar Z ring septums. Rapidly oscillates between the poles of the cell to destabilize FtsZ filaments that have formed before they mature into polar Z rings. Prevents FtsZ polymerization. This is Probable septum site-determining protein MinC from Pseudomonas fluorescens (strain SBW25).